We begin with the raw amino-acid sequence, 158 residues long: Transcriptional repressor NrdR (158 aa).

The segment at 1–20 (MRCPSCGSLDTQVKDSRPTE) is disordered. Residues 3–34 (CPSCGSLDTQVKDSRPTEDSSVIRRRRVCLTC) fold into a zinc finger. The region spanning 49–139 (LTVIKRNGRR…VYRNFREAKD (91 aa)) is the ATP-cone domain.

Belongs to the NrdR family. It depends on Zn(2+) as a cofactor.

Negatively regulates transcription of bacterial ribonucleotide reductase nrd genes and operons by binding to NrdR-boxes. The polypeptide is Transcriptional repressor NrdR (Afipia carboxidovorans (strain ATCC 49405 / DSM 1227 / KCTC 32145 / OM5) (Oligotropha carboxidovorans)).